Reading from the N-terminus, the 33-residue chain is Photosystem II reaction center protein Psb30 (33 aa).

A helical transmembrane segment spans residues Leu-5 to Leu-25.

Belongs to the Psb30/Ycf12 family. As to quaternary structure, PSII is composed of 1 copy each of membrane proteins PsbA, PsbB, PsbC, PsbD, PsbE, PsbF, PsbH, PsbI, PsbJ, PsbK, PsbL, PsbM, PsbT, PsbY, PsbZ, Psb30/Ycf12, peripheral proteins of the oxygen-evolving complex and a large number of cofactors. It forms dimeric complexes.

It localises to the plastid. Its subcellular location is the chloroplast thylakoid membrane. A core subunit of photosystem II (PSII), probably helps stabilize the reaction center. The chain is Photosystem II reaction center protein Psb30 from Euglena sanguinea.